The primary structure comprises 514 residues: Peptide chain release factor 3 (514 aa).

Residues 8–268 (KKRRTFAIIS…TFLEFAPEPH (261 aa)) enclose the tr-type G domain. GTP contacts are provided by residues 17-24 (SHPDAGKT), 85-89 (DTPGH), and 139-142 (NKLD).

This sequence belongs to the TRAFAC class translation factor GTPase superfamily. Classic translation factor GTPase family. PrfC subfamily.

It is found in the cytoplasm. Its function is as follows. Increases the formation of ribosomal termination complexes and stimulates activities of RF-1 and RF-2. It binds guanine nucleotides and has strong preference for UGA stop codons. It may interact directly with the ribosome. The stimulation of RF-1 and RF-2 is significantly reduced by GTP and GDP, but not by GMP. The chain is Peptide chain release factor 3 from Streptococcus pyogenes serotype M2 (strain MGAS10270).